The following is a 711-amino-acid chain: Polyribonucleotide nucleotidyltransferase (711 aa).

D494 and D500 together coordinate Mg(2+). Residues 560–620 enclose the KH domain; sequence PKIEIFGVDP…INVENAKSDI (61 aa). Residues 651 to 710 enclose the S1 motif domain; sequence GEEFDGVVKKIMDFGAFISLKDGIDGLLHVSKIKTQLSEGDTLRVKVEEIKRGKISLELC.

Belongs to the polyribonucleotide nucleotidyltransferase family. Mg(2+) serves as cofactor.

It is found in the cytoplasm. The catalysed reaction is RNA(n+1) + phosphate = RNA(n) + a ribonucleoside 5'-diphosphate. In terms of biological role, involved in mRNA degradation. Catalyzes the phosphorolysis of single-stranded polyribonucleotides processively in the 3'- to 5'-direction. This is Polyribonucleotide nucleotidyltransferase from Campylobacter hominis (strain ATCC BAA-381 / DSM 21671 / CCUG 45161 / LMG 19568 / NCTC 13146 / CH001A).